Here is a 453-residue protein sequence, read N- to C-terminus: Exopolyphosphatase PRUNE1 (453 aa).

Residue Met-1 is modified to N-acetylmethionine. Residues Asp-28, Asp-30, Asp-106, and Asp-179 each contribute to the Mn(2+) site. Positions 106-108 (DHH) match the DHH motif motif. The tract at residues 393 to 420 (SLISGLSQDEEDPPLPPTPMNSLVDECP) is essential for homodimerization. Residues 395-421 (ISGLSQDEEDPPLPPTPMNSLVDECPL) are disordered. Ser-399 is subject to Phosphoserine. Thr-410 carries the phosphothreonine modification. Phosphoserine is present on Ser-414.

It belongs to the PPase class C family. Prune subfamily. Homooligomer. Able to homodimerize via its C-terminal domain. Interacts with NME1. Interacts with GSK3; at focal adhesion complexes where paxillin and vinculin are colocalized. Interacts with alpha and beta tubulin. Mn(2+) serves as cofactor. In terms of tissue distribution, ubiquitously expressed. Seems to be overexpressed in aggressive sarcoma subtypes, such as leiomyosarcomas and malignant fibrous histiocytomas (MFH) as well as in the less malignant liposarcomas.

It localises to the cytoplasm. Its subcellular location is the nucleus. The protein localises to the cell junction. The protein resides in the focal adhesion. It catalyses the reaction diphosphate + H2O = 2 phosphate + H(+). Its activity is regulated as follows. Activated by magnesium ions and inhibited by manganese ions. Inhibited by dipyridamole, moderately sensitive to IBMX and inhibited by vinpocetine. Phosphodiesterase (PDE) that has higher activity toward cAMP than cGMP, as substrate. Plays a role in cell proliferation, migration and differentiation, and acts as a negative regulator of NME1. Plays a role in the regulation of neurogenesis. Involved in the regulation of microtubule polymerization. This Homo sapiens (Human) protein is Exopolyphosphatase PRUNE1.